A 164-amino-acid chain; its full sequence is Transcription elongation factor GreA (164 aa).

Positions Tyr-50–Val-76 form a coiled coil.

This sequence belongs to the GreA/GreB family.

Functionally, necessary for efficient RNA polymerase transcription elongation past template-encoded arresting sites. The arresting sites in DNA have the property of trapping a certain fraction of elongating RNA polymerases that pass through, resulting in locked ternary complexes. Cleavage of the nascent transcript by cleavage factors such as GreA or GreB allows the resumption of elongation from the new 3'terminus. GreA releases sequences of 2 to 3 nucleotides. This Mycobacterium bovis (strain ATCC BAA-935 / AF2122/97) protein is Transcription elongation factor GreA.